Here is an 812-residue protein sequence, read N- to C-terminus: Lon protease (812 aa).

One can recognise a Lon N-terminal domain in the interval 22–215 (YAVLPLRDIV…KALSFMEAEI (194 aa)). An ATP-binding site is contributed by 367–374 (GPPGVGKT). One can recognise a Lon proteolytic domain in the interval 602–783 (EDQVGVVTGL…GEVLKHALVR (182 aa)). Residues serine 689 and lysine 732 contribute to the active site. The segment at 787–812 (PIEWTEQENPTAVPPVEDEAGASLAH) is disordered.

Belongs to the peptidase S16 family. In terms of assembly, homohexamer. Organized in a ring with a central cavity.

The protein localises to the cytoplasm. The catalysed reaction is Hydrolysis of proteins in presence of ATP.. ATP-dependent serine protease that mediates the selective degradation of mutant and abnormal proteins as well as certain short-lived regulatory proteins. Required for cellular homeostasis and for survival from DNA damage and developmental changes induced by stress. Degrades polypeptides processively to yield small peptide fragments that are 5 to 10 amino acids long. Binds to DNA in a double-stranded, site-specific manner. Required for wild-type virulence during the initial stages of infection in the mouse model, but not essential for the establishment and maintenance of chronic infection in this host. This is Lon protease from Brucella abortus (strain 2308).